Reading from the N-terminus, the 109-residue chain is Defensin-B5 (109 aa).

An N-terminal signal peptide occupies residues 1-20 (MRGLLPFLFLLSFFLSPIQA). Residues 21–44 (QPEGREEELEETWSEDRDQAPPRV) are disordered. The propeptide occupies 21-70 (QPEGREEELEETWSEDRDQAPPRVVEESEVVGAENEAGLAAGRSYPWIIL). The span at 34–44 (SEDRDQAPPRV) shows a compositional bias: basic and acidic residues. 3 disulfides stabilise this stretch: cysteine 73–cysteine 101, cysteine 80–cysteine 95, and cysteine 85–cysteine 102. Residues 107 to 109 (AVP) constitute a propeptide that is removed on maturation.

Belongs to the beta-defensin family. In terms of tissue distribution, highly expressed in kidney, and expressed at lower levels in testis.

It is found in the secreted. Has antimicrobial activity. The sequence is that of Defensin-B5 from Ornithorhynchus anatinus (Duckbill platypus).